A 247-amino-acid chain; its full sequence is E3 SUMO-protein ligase NSE2 (247 aa).

Met1 is subject to N-acetylmethionine. Glycyl lysine isopeptide (Lys-Gly) (interchain with G-Cter in SUMO2) cross-links involve residues Lys90 and Lys107. The residue at position 116 (Ser116) is a Phosphoserine. Residues Lys125 and Lys130 each participate in a glycyl lysine isopeptide (Lys-Gly) (interchain with G-Cter in SUMO2) cross-link. An SP-RING-type zinc finger spans residues 154 to 240 (VDEDMIVTQS…LRRAIESHNK (87 aa)). The Zn(2+) site is built by Cys185, His187, Cys210, and Cys215.

The protein belongs to the NSE2 family. Component of the SMC5-SMC6 complex which consists at least of SMC5, SMC6, NSMCE2, NSMCE1, NSMCE4A or EID3 and NSMCE3. Post-translationally, sumoylated, possibly via autosumoylation.

The protein resides in the nucleus. Its subcellular location is the chromosome. The protein localises to the telomere. It is found in the PML body. The protein operates within protein modification; protein sumoylation. Functionally, E3 SUMO-protein ligase component of the SMC5-SMC6 complex, a complex involved in DNA double-strand break repair by homologous recombination. Is not be required for the stability of the complex. The complex may promote sister chromatid homologous recombination by recruiting the SMC1-SMC3 cohesin complex to double-strand breaks. Acts as an E3 ligase mediating SUMO attachment to various proteins such as SMC6L1 and TSNAX, the shelterin complex subunits TERF1, TERF2, TINF2 and TERF2IP, RAD51AP1, and maybe the cohesin components RAD21 and STAG2. Required for recruitment of telomeres to PML nuclear bodies. Required for sister chromatid cohesion during prometaphase and mitotic progression. This is E3 SUMO-protein ligase NSE2 (Nsmce2) from Mus musculus (Mouse).